Consider the following 554-residue polypeptide: 3-(3-hydroxy-phenyl)propionate/3-hydroxycinnamic acid hydroxylase (554 aa).

FAD-binding positions include 17 to 46 (QVAI…VVEK) and 285 to 295 (FRIDRVLLAGD).

Belongs to the PheA/TfdB FAD monooxygenase family. FAD is required as a cofactor.

The catalysed reaction is 3-(3-hydroxyphenyl)propanoate + NADH + O2 + H(+) = 3-(2,3-dihydroxyphenyl)propanoate + NAD(+) + H2O. The enzyme catalyses (2E)-3-(3-hydroxyphenyl)prop-2-enoate + NADH + O2 + H(+) = (2E)-3-(2,3-dihydroxyphenyl)prop-2-enoate + NAD(+) + H2O. The protein operates within aromatic compound metabolism; 3-phenylpropanoate degradation. Functionally, catalyzes the insertion of one atom of molecular oxygen into position 2 of the phenyl ring of 3-(3-hydroxyphenyl)propionate (3-HPP) and hydroxycinnamic acid (3HCI). This chain is 3-(3-hydroxy-phenyl)propionate/3-hydroxycinnamic acid hydroxylase, found in Shigella sonnei (strain Ss046).